The sequence spans 139 residues: uncharacterized protein (139 aa).

Residues 19-73 enclose the HTH cro/C1-type domain; sequence IRLRRTMLGMSQEKLGESLGITFQQIQKYEKGTNRVGASRLQNISQILNVPVSFF. A DNA-binding region (H-T-H motif) is located at residues 30–49; the sequence is QEKLGESLGITFQQIQKYEK.

This is an uncharacterized protein from Rhizobium meliloti (strain 1021) (Ensifer meliloti).